A 151-amino-acid chain; its full sequence is UPF0208 membrane protein YPDSF_1972 (151 aa).

Helical transmembrane passes span 46–66 (FGIR…IALG) and 69–89 (LGPA…GLWW).

Belongs to the UPF0208 family.

The protein localises to the cell inner membrane. The chain is UPF0208 membrane protein YPDSF_1972 from Yersinia pestis (strain Pestoides F).